The following is a 244-amino-acid chain: Proteasome subunit alpha (244 aa).

It belongs to the peptidase T1A family. In terms of assembly, the 20S proteasome core is composed of 14 alpha and 14 beta subunits that assemble into four stacked heptameric rings, resulting in a barrel-shaped structure. The two inner rings, each composed of seven catalytic beta subunits, are sandwiched by two outer rings, each composed of seven alpha subunits. The catalytic chamber with the active sites is on the inside of the barrel. Has a gated structure, the ends of the cylinder being occluded by the N-termini of the alpha-subunits. Is capped by the proteasome-associated ATPase, ARC.

It localises to the cytoplasm. Its pathway is protein degradation; proteasomal Pup-dependent pathway. Its activity is regulated as follows. The formation of the proteasomal ATPase ARC-20S proteasome complex, likely via the docking of the C-termini of ARC into the intersubunit pockets in the alpha-rings, may trigger opening of the gate for substrate entry. Interconversion between the open-gate and close-gate conformations leads to a dynamic regulation of the 20S proteasome proteolysis activity. Functionally, component of the proteasome core, a large protease complex with broad specificity involved in protein degradation. The chain is Proteasome subunit alpha from Xylanimonas cellulosilytica (strain DSM 15894 / JCM 12276 / CECT 5975 / KCTC 9989 / LMG 20990 / NBRC 107835 / XIL07).